Reading from the N-terminus, the 386-residue chain is Succinate--CoA ligase [ADP-forming] subunit beta (386 aa).

An ATP-grasp domain is found at 9–244; it reads KEILRKYGVP…HDEEDPLETR (236 aa). ATP contacts are provided by residues Lys-46, 53–55, Glu-99, Cys-102, and Glu-107; that span reads GRG. The Mg(2+) site is built by Asn-199 and Asp-213. Residues Asn-264 and 321–323 each bind substrate; that span reads GIM.

This sequence belongs to the succinate/malate CoA ligase beta subunit family. Heterotetramer of two alpha and two beta subunits. It depends on Mg(2+) as a cofactor.

The catalysed reaction is succinate + ATP + CoA = succinyl-CoA + ADP + phosphate. It catalyses the reaction GTP + succinate + CoA = succinyl-CoA + GDP + phosphate. It participates in carbohydrate metabolism; tricarboxylic acid cycle; succinate from succinyl-CoA (ligase route): step 1/1. Succinyl-CoA synthetase functions in the citric acid cycle (TCA), coupling the hydrolysis of succinyl-CoA to the synthesis of either ATP or GTP and thus represents the only step of substrate-level phosphorylation in the TCA. The beta subunit provides nucleotide specificity of the enzyme and binds the substrate succinate, while the binding sites for coenzyme A and phosphate are found in the alpha subunit. The chain is Succinate--CoA ligase [ADP-forming] subunit beta from Rickettsia massiliae (strain Mtu5).